Consider the following 359-residue polypeptide: Fe-S cluster assembly protein DRE2 (359 aa).

Residues 1 to 159 (MANILLLLHP…LFKKLSSNSN (159 aa)) are N-terminal SAM-like domain. The disordered stretch occupies residues 152–187 (KKLSSNSNNNNNSSSPIGLTDSSAANTDEETDEANV). Low complexity predominate over residues 155–166 (SSNSNNNNNSSS). The interval 159–228 (NNNNNSSSPI…DDLIKDSNQL (70 aa)) is linker. Residues 167 to 177 (PIGLTDSSAAN) are compositionally biased toward polar residues. Residues cysteine 240, cysteine 252, cysteine 255, and cysteine 257 each contribute to the [2Fe-2S] cluster site. Positions 240–257 (CEIPNGKKRRKACKDCTC) are fe-S binding site A. The [4Fe-4S] cluster site is built by cysteine 322, cysteine 325, cysteine 333, and cysteine 336. 2 consecutive short sequence motifs (cx2C motif) follow at residues 322-325 (CGSC) and 333-336 (CDGC). A fe-S binding site B region spans residues 322-336 (CGSCALGDAFRCDGC).

Belongs to the anamorsin family. Monomer. Interacts with TAH18. Interacts with MIA40. [2Fe-2S] cluster is required as a cofactor. [4Fe-4S] cluster serves as cofactor.

It is found in the cytoplasm. The protein resides in the mitochondrion intermembrane space. Functionally, component of the cytosolic iron-sulfur (Fe-S) protein assembly (CIA) machinery required for the maturation of extramitochondrial Fe-S proteins. Part of an electron transfer chain functioning in an early step of cytosolic Fe-S biogenesis, facilitating the de novo assembly of a [4Fe-4S] cluster on the scaffold complex CFD1-NBP35. Electrons are transferred to DRE2 from NADPH via the FAD- and FMN-containing protein TAH18. TAH18-DRE2 are also required for the assembly of the diferric tyrosyl radical cofactor of ribonucleotide reductase (RNR), probably by providing electrons for reduction during radical cofactor maturation in the catalytic small subunit RNR2. This is Fe-S cluster assembly protein DRE2 from Scheffersomyces stipitis (strain ATCC 58785 / CBS 6054 / NBRC 10063 / NRRL Y-11545) (Yeast).